A 372-amino-acid chain; its full sequence is Cytochrome b (372 aa).

4 helical membrane passes run 25 to 45 (FGSMLLTCLMLQILTGFFLAI), 69 to 90 (WIMQNLHAISASLFFICVYIHI), 105 to 125 (WLSGMTLLVFLMATAFFGYVL), and 170 to 190 (FFALHFILPFVIISLSSIHIM). Heme b-binding residues include His75 and His89. Heme b contacts are provided by His174 and His188. His193 contacts a ubiquinone. Transmembrane regions (helical) follow at residues 218–238 (YKDMLMITTMITLLFLILSFS), 280–300 (LGGTLALLLSVVILTTAPFTH), 312–332 (LSQILFWTFIATFITITWTAS), and 339–358 (FILISQTTSIFYFSFFIMAP).

This sequence belongs to the cytochrome b family. As to quaternary structure, the cytochrome bc1 complex contains 3 respiratory subunits (MT-CYB, CYC1 and UQCRFS1), 2 core proteins (UQCRC1 and UQCRC2) and probably 6 low-molecular weight proteins. Heme b is required as a cofactor.

It is found in the mitochondrion inner membrane. In terms of biological role, component of the ubiquinol-cytochrome c reductase complex (complex III or cytochrome b-c1 complex) that is part of the mitochondrial respiratory chain. The b-c1 complex mediates electron transfer from ubiquinol to cytochrome c. Contributes to the generation of a proton gradient across the mitochondrial membrane that is then used for ATP synthesis. In Hemachatus haemachatus (Rinkhals), this protein is Cytochrome b (MT-CYB).